The primary structure comprises 475 residues: Sensor histidine kinase QseE (475 aa).

Residues M1–Q13 lie on the Cytoplasmic side of the membrane. A helical transmembrane segment spans residues L14–W34. The Periplasmic portion of the chain corresponds to Q35–Q173. Residues Y174–T194 form a helical membrane-spanning segment. Residues R195–K475 are Cytoplasmic-facing. The region spanning H256 to K472 is the Histidine kinase domain. Position 259 is a phosphohistidine; by autocatalysis (H259).

Autophosphorylated.

It is found in the cell inner membrane. It catalyses the reaction ATP + protein L-histidine = ADP + protein N-phospho-L-histidine.. Functionally, member of the two-component regulatory system QseF/QseE involved in the regulation of virulence and metabolism in EHEC. Required for pedestal formation in host epithelial cells during infection. Autophosphorylates in response to epinephrine, sulfate or phosphate and then probably transfers its phosphate group to QseF. In Escherichia coli O157:H7, this protein is Sensor histidine kinase QseE (qseE).